The following is a 345-amino-acid chain: Beta-hexosaminidase (345 aa).

Residues aspartate 60, arginine 68, arginine 132, and 162 to 163 (KH) contribute to the substrate site. Histidine 175 functions as the Proton donor/acceptor in the catalytic mechanism. The active-site Nucleophile is aspartate 247.

It belongs to the glycosyl hydrolase 3 family. NagZ subfamily.

It is found in the cytoplasm. The catalysed reaction is Hydrolysis of terminal non-reducing N-acetyl-D-hexosamine residues in N-acetyl-beta-D-hexosaminides.. The protein operates within cell wall biogenesis; peptidoglycan recycling. Its function is as follows. Plays a role in peptidoglycan recycling by cleaving the terminal beta-1,4-linked N-acetylglucosamine (GlcNAc) from peptide-linked peptidoglycan fragments, giving rise to free GlcNAc, anhydro-N-acetylmuramic acid and anhydro-N-acetylmuramic acid-linked peptides. The polypeptide is Beta-hexosaminidase (Actinobacillus pleuropneumoniae serotype 3 (strain JL03)).